We begin with the raw amino-acid sequence, 199 residues long: Holliday junction branch migration complex subunit RuvA (199 aa).

The domain I stretch occupies residues 1–62; it reads MIAYIKGLLA…EDGIQFFGFA (62 aa). A domain II region spans residues 63 to 141; that stretch reads KEDEKECFLL…GMAAVEHSTL (79 aa). The segment at 142 to 152 is flexible linker; sequence QQSVITTGSGD. The segment at 152–199 is domain III; sequence DEAVEALLALGYSQGEARDAVKKAQKSAPEEDLSALIKIALKELAPSR.

It belongs to the RuvA family. Homotetramer. Forms an RuvA(8)-RuvB(12)-Holliday junction (HJ) complex. HJ DNA is sandwiched between 2 RuvA tetramers; dsDNA enters through RuvA and exits via RuvB. An RuvB hexamer assembles on each DNA strand where it exits the tetramer. Each RuvB hexamer is contacted by two RuvA subunits (via domain III) on 2 adjacent RuvB subunits; this complex drives branch migration. In the full resolvosome a probable DNA-RuvA(4)-RuvB(12)-RuvC(2) complex forms which resolves the HJ.

The protein resides in the cytoplasm. The RuvA-RuvB-RuvC complex processes Holliday junction (HJ) DNA during genetic recombination and DNA repair, while the RuvA-RuvB complex plays an important role in the rescue of blocked DNA replication forks via replication fork reversal (RFR). RuvA specifically binds to HJ cruciform DNA, conferring on it an open structure. The RuvB hexamer acts as an ATP-dependent pump, pulling dsDNA into and through the RuvAB complex. HJ branch migration allows RuvC to scan DNA until it finds its consensus sequence, where it cleaves and resolves the cruciform DNA. The protein is Holliday junction branch migration complex subunit RuvA of Desulforamulus reducens (strain ATCC BAA-1160 / DSM 100696 / MI-1) (Desulfotomaculum reducens).